The primary structure comprises 622 residues: MSTSSSDPFYNFAKTSFKSAAAQKASATSLPPLPGPDQKVPGMDIKYDVVIVGSGPIGCTYARELVEAGYKVAMFDIGEIDSGLKIGAHKKNTVEYQKNIDKFVNVIQGQLMSVSVPVNKLVVDTLSPTSWQASTFFVRNGSNPEQDPLRNLSGQAVTRVVGGMSTHWTCATPRFDREQRPLLVKDDPDADDAIWDQLYTKAESYFKTGTDQFNESIRHNLVLNKLAEEYKGQRTFQQIPLAATRRNPTFVEWSSANTVFDLQNRPNIDAPEERFNLFPAVACERVMRNASNTAIESLHIRDLISGDRFAIQADVYVLTAGAVHNTQLLVNSGFGKLGRPDPANPPELLPFLGSYITEQSLVFCQTVMSTELIDSVKSDMTIIGNPGELGYSVSYMPGASTNKHPDWWNEKVQNHMMQHQEDPLPIPFEDPEPQVTTLFQPSHPWHTQIHRDAFSYGAVQQSIDSRLIVDWRFFGRTEPKEENKLWFSDKITDAYNMPQPTFDFRFPAGRTSQEAEDMMTDMCVMSAKIGGFLPGSLPQFMEPGLVLHLGGTHRMGFDEQEDNCCVDTDSRVFGFNNLFLGGCGNIPTAYGANPTLTAMSLAIKSCEYIKKNFTPSPFTPAQ.

Residues Met1 to Thr28 form the signal peptide. A propeptide spanning residues Ser29 to Gln38 is cleaved from the precursor. At His167 the chain carries Tele-8alpha-FAD histidine. Substrate contacts are provided by Gln448 and His450. Catalysis depends on His548, which acts as the Proton acceptor. Residue Asn593 is part of the active site.

The protein belongs to the GMC oxidoreductase family. As to quaternary structure, homotetramer. The cofactor is FAD.

It is found in the periplasm. It catalyses the reaction D-glucose + O2 = 2-dehydro-D-glucose + H2O2. In terms of biological role, catalyzes the oxidation of various aldopyranoses and disaccharides on carbon-2 to the corresponding 2-keto sugars concomitant with the reduction of O(2) to H(2)O(2). Plays an important role in lignin degradation of wood rot fungi by supplying the essential cosubstrate H(2)O(2) for the ligninolytic peroxidases, lignin peroxidase and manganese-dependent peroxidase. The protein is Pyranose 2-oxidase (p2ox) of Trametes pubescens (White-rot fungus).